The sequence spans 477 residues: Aspartyl/glutamyl-tRNA(Asn/Gln) amidotransferase subunit B (477 aa).

Belongs to the GatB/GatE family. GatB subfamily. In terms of assembly, heterotrimer of A, B and C subunits.

The catalysed reaction is L-glutamyl-tRNA(Gln) + L-glutamine + ATP + H2O = L-glutaminyl-tRNA(Gln) + L-glutamate + ADP + phosphate + H(+). It carries out the reaction L-aspartyl-tRNA(Asn) + L-glutamine + ATP + H2O = L-asparaginyl-tRNA(Asn) + L-glutamate + ADP + phosphate + 2 H(+). Its function is as follows. Allows the formation of correctly charged Asn-tRNA(Asn) or Gln-tRNA(Gln) through the transamidation of misacylated Asp-tRNA(Asn) or Glu-tRNA(Gln) in organisms which lack either or both of asparaginyl-tRNA or glutaminyl-tRNA synthetases. The reaction takes place in the presence of glutamine and ATP through an activated phospho-Asp-tRNA(Asn) or phospho-Glu-tRNA(Gln). The protein is Aspartyl/glutamyl-tRNA(Asn/Gln) amidotransferase subunit B of Methylobacillus flagellatus (strain ATCC 51484 / DSM 6875 / VKM B-1610 / KT).